A 954-amino-acid polypeptide reads, in one-letter code: Valine--tRNA ligase (954 aa).

The 'HIGH' region signature appears at 48–58 (PNVTGSLHMGH). The short motif at 560–564 (KMSKS) is the 'KMSKS' region element. Lys-563 provides a ligand contact to ATP. A coiled-coil region spans residues 883–953 (AGFINKEAEL…IQEQYKAIEA (71 aa)).

Belongs to the class-I aminoacyl-tRNA synthetase family. ValS type 1 subfamily. As to quaternary structure, monomer.

It localises to the cytoplasm. It carries out the reaction tRNA(Val) + L-valine + ATP = L-valyl-tRNA(Val) + AMP + diphosphate. Functionally, catalyzes the attachment of valine to tRNA(Val). As ValRS can inadvertently accommodate and process structurally similar amino acids such as threonine, to avoid such errors, it has a 'posttransfer' editing activity that hydrolyzes mischarged Thr-tRNA(Val) in a tRNA-dependent manner. In Haemophilus influenzae (strain 86-028NP), this protein is Valine--tRNA ligase.